The following is a 246-amino-acid chain: NAD(P)H-hydrate epimerase (246 aa).

A YjeF N-terminal domain is found at 12–234; it reads AAEIDKELMG…DFANKFGFEP (223 aa). 69 to 73 provides a ligand contact to (6S)-NADPHX; that stretch reads NNGGD. K(+) is bound by residues asparagine 70 and aspartate 138. (6S)-NADPHX-binding positions include 142-148 and aspartate 173; that span reads GFSFKPP. Threonine 176 serves as a coordination point for K(+).

It belongs to the NnrE/AIBP family. It depends on K(+) as a cofactor.

The protein resides in the cytoplasm. The protein localises to the mitochondrion. It catalyses the reaction (6R)-NADHX = (6S)-NADHX. The catalysed reaction is (6R)-NADPHX = (6S)-NADPHX. Functionally, catalyzes the epimerization of the S- and R-forms of NAD(P)HX, a damaged form of NAD(P)H that is a result of enzymatic or heat-dependent hydration. This is a prerequisite for the S-specific NAD(P)H-hydrate dehydratase to allow the repair of both epimers of NAD(P)HX. The polypeptide is NAD(P)H-hydrate epimerase (Saccharomyces cerevisiae (strain ATCC 204508 / S288c) (Baker's yeast)).